Here is a 276-residue protein sequence, read N- to C-terminus: Large ribosomal subunit protein uL2 (276 aa).

The interval 224-276 (AMNPIDHPHGGGEGKTSGGRNPVTPWGVPTKGKKTRKRNKSSNKYIKRVSDKG) is disordered. The segment covering 254-270 (KGKKTRKRNKSSNKYIK) has biased composition (basic residues).

The protein belongs to the universal ribosomal protein uL2 family. In terms of assembly, part of the 50S ribosomal subunit. Forms a bridge to the 30S subunit in the 70S ribosome.

In terms of biological role, one of the primary rRNA binding proteins. Required for association of the 30S and 50S subunits to form the 70S ribosome, for tRNA binding and peptide bond formation. It has been suggested to have peptidyltransferase activity; this is somewhat controversial. Makes several contacts with the 16S rRNA in the 70S ribosome. The polypeptide is Large ribosomal subunit protein uL2 (Ehrlichia canis (strain Jake)).